A 297-amino-acid polypeptide reads, in one-letter code: Ribosomal RNA small subunit methyltransferase A (297 aa).

N31, L33, G58, E79, D104, and N129 together coordinate S-adenosyl-L-methionine.

It belongs to the class I-like SAM-binding methyltransferase superfamily. rRNA adenine N(6)-methyltransferase family. RsmA subfamily.

Its subcellular location is the cytoplasm. It catalyses the reaction adenosine(1518)/adenosine(1519) in 16S rRNA + 4 S-adenosyl-L-methionine = N(6)-dimethyladenosine(1518)/N(6)-dimethyladenosine(1519) in 16S rRNA + 4 S-adenosyl-L-homocysteine + 4 H(+). In terms of biological role, specifically dimethylates two adjacent adenosines (A1518 and A1519) in the loop of a conserved hairpin near the 3'-end of 16S rRNA in the 30S particle. May play a critical role in biogenesis of 30S subunits. In Staphylococcus aureus (strain Mu3 / ATCC 700698), this protein is Ribosomal RNA small subunit methyltransferase A.